The sequence spans 200 residues: GTP-binding protein ypt2 (200 aa).

16-23 contributes to the GTP binding site; the sequence is GDSGVGKS. The Effector region motif lies at 38–46; that stretch reads FITTIGIDF. GTP is bound by residues 64-68 and 122-125; these read DTAGQ and NKCD. S-geranylgeranyl cysteine attachment occurs at residues Cys199 and Cys200.

It belongs to the small GTPase superfamily. Rab family.

The protein resides in the cell membrane. Functionally, protein transport. Probably involved in vesicular traffic. The chain is GTP-binding protein ypt2 (ypt2) from Schizosaccharomyces pombe (strain 972 / ATCC 24843) (Fission yeast).